A 133-amino-acid chain; its full sequence is ATP synthase epsilon chain, chloroplastic (133 aa).

It belongs to the ATPase epsilon chain family. As to quaternary structure, F-type ATPases have 2 components, CF(1) - the catalytic core - and CF(0) - the membrane proton channel. CF(1) has five subunits: alpha(3), beta(3), gamma(1), delta(1), epsilon(1). CF(0) has three main subunits: a, b and c.

The protein resides in the plastid. Its subcellular location is the chloroplast thylakoid membrane. Functionally, produces ATP from ADP in the presence of a proton gradient across the membrane. The sequence is that of ATP synthase epsilon chain, chloroplastic from Nicotiana tomentosiformis (Tobacco).